A 299-amino-acid chain; its full sequence is Mitochondrial 2-oxodicarboxylate carrier (299 aa).

3 Solcar repeats span residues Arg11 to Leu100, Ser107 to Met196, and Leu205 to Trp294. A run of 6 helical transmembrane segments spans residues Ile17–Val37, Phe70–Val89, Thr113–Val133, Gly167–Phe187, Leu205–Asn225, and Leu277–Glu297.

Belongs to the mitochondrial carrier (TC 2.A.29) family.

The protein resides in the mitochondrion inner membrane. The enzyme catalyses 2-oxoadipate(in) + 2-oxoglutarate(out) = 2-oxoadipate(out) + 2-oxoglutarate(in). It catalyses the reaction hexanedioate(in) + 2-oxoglutarate(out) = hexanedioate(out) + 2-oxoglutarate(in). It carries out the reaction L-2-aminoadipate(in) + 2-oxoglutarate(out) = L-2-aminoadipate(out) + 2-oxoglutarate(in). The catalysed reaction is glutarate(in) + 2-oxoglutarate(out) = glutarate(out) + 2-oxoglutarate(in). The enzyme catalyses 2-oxoheptanedioate(in) + 2-oxoglutarate(out) = 2-oxoheptanedioate(out) + 2-oxoglutarate(in). It catalyses the reaction heptanedioate(in) + 2-oxoglutarate(out) = heptanedioate(out) + 2-oxoglutarate(in). It carries out the reaction citrate(in) + 2-oxoglutarate(out) = citrate(out) + 2-oxoglutarate(in). Its function is as follows. Transports dicarboxylates across the inner membranes of mitochondria by a counter-exchange mechanism. Can transport 2-oxoadipate (2-oxohexanedioate), 2-oxoglutarate, adipate (hexanedioate), glutarate, and to a lesser extent, pimelate (heptanedioate), 2-oxopimelate (2-oxoheptanedioate), 2-aminoadipate (2-aminohexanedioate), oxaloacetate, and citrate. Plays a central role in catabolism of lysine, hydroxylysine, and tryptophan, by transporting common metabolite intermediates (such as 2-oxoadipate) into the mitochondria, where it is converted into acetyl-CoA and can enter the citric acid (TCA) cycle. This chain is Mitochondrial 2-oxodicarboxylate carrier (SLC25A21), found in Pongo abelii (Sumatran orangutan).